The primary structure comprises 121 residues: Large ribosomal subunit protein uL22 (121 aa).

The protein belongs to the universal ribosomal protein uL22 family. As to quaternary structure, part of the 50S ribosomal subunit.

Its function is as follows. This protein binds specifically to 23S rRNA; its binding is stimulated by other ribosomal proteins, e.g. L4, L17, and L20. It is important during the early stages of 50S assembly. It makes multiple contacts with different domains of the 23S rRNA in the assembled 50S subunit and ribosome. Functionally, the globular domain of the protein is located near the polypeptide exit tunnel on the outside of the subunit, while an extended beta-hairpin is found that lines the wall of the exit tunnel in the center of the 70S ribosome. This Hydrogenobaculum sp. (strain Y04AAS1) protein is Large ribosomal subunit protein uL22.